A 340-amino-acid chain; its full sequence is DNA-directed RNA polymerase subunit alpha (340 aa).

An alpha N-terminal domain (alpha-NTD) region spans residues 1-236 (MLSLSKNWNT…EQLQLFISFE (236 aa)). An alpha C-terminal domain (alpha-CTD) region spans residues 246–340 (TDALPFSPYL…LSNRYEDSYN (95 aa)).

It belongs to the RNA polymerase alpha chain family. Homodimer. The RNAP catalytic core consists of 2 alpha, 1 beta, 1 beta' and 1 omega subunit. When a sigma factor is associated with the core the holoenzyme is formed, which can initiate transcription.

It carries out the reaction RNA(n) + a ribonucleoside 5'-triphosphate = RNA(n+1) + diphosphate. Functionally, DNA-dependent RNA polymerase catalyzes the transcription of DNA into RNA using the four ribonucleoside triphosphates as substrates. The polypeptide is DNA-directed RNA polymerase subunit alpha (Rickettsia felis (strain ATCC VR-1525 / URRWXCal2) (Rickettsia azadi)).